We begin with the raw amino-acid sequence, 341 residues long: NADH-quinone oxidoreductase subunit H 1 (341 aa).

8 consecutive transmembrane segments (helical) span residues 13-33 (LVVI…IAYI), 82-102 (GLFL…WAVI), 115-135 (VGVL…IMAG), 161-181 (IGFV…TAIV), 190-210 (MLGW…VSAL), 248-268 (YVAI…GWLP), 277-297 (WVPG…LFAM), and 313-333 (LGWK…ASVL).

This sequence belongs to the complex I subunit 1 family. In terms of assembly, NDH-1 is composed of 14 different subunits. Subunits NuoA, H, J, K, L, M, N constitute the membrane sector of the complex.

The protein localises to the cell inner membrane. It carries out the reaction a quinone + NADH + 5 H(+)(in) = a quinol + NAD(+) + 4 H(+)(out). NDH-1 shuttles electrons from NADH, via FMN and iron-sulfur (Fe-S) centers, to quinones in the respiratory chain. The immediate electron acceptor for the enzyme in this species is believed to be ubiquinone. Couples the redox reaction to proton translocation (for every two electrons transferred, four hydrogen ions are translocated across the cytoplasmic membrane), and thus conserves the redox energy in a proton gradient. This subunit may bind ubiquinone. This chain is NADH-quinone oxidoreductase subunit H 1, found in Rhodopseudomonas palustris (strain ATCC BAA-98 / CGA009).